Consider the following 127-residue polypeptide: Ribonuclease P protein component (127 aa).

It belongs to the RnpA family. As to quaternary structure, consists of a catalytic RNA component (M1 or rnpB) and a protein subunit.

It catalyses the reaction Endonucleolytic cleavage of RNA, removing 5'-extranucleotides from tRNA precursor.. In terms of biological role, RNaseP catalyzes the removal of the 5'-leader sequence from pre-tRNA to produce the mature 5'-terminus. It can also cleave other RNA substrates such as 4.5S RNA. The protein component plays an auxiliary but essential role in vivo by binding to the 5'-leader sequence and broadening the substrate specificity of the ribozyme. The chain is Ribonuclease P protein component from Agrobacterium fabrum (strain C58 / ATCC 33970) (Agrobacterium tumefaciens (strain C58)).